Consider the following 207-residue polypeptide: Probable nicotinate-nucleotide adenylyltransferase (207 aa).

The protein belongs to the NadD family.

It carries out the reaction nicotinate beta-D-ribonucleotide + ATP + H(+) = deamido-NAD(+) + diphosphate. Its pathway is cofactor biosynthesis; NAD(+) biosynthesis; deamido-NAD(+) from nicotinate D-ribonucleotide: step 1/1. In terms of biological role, catalyzes the reversible adenylation of nicotinate mononucleotide (NaMN) to nicotinic acid adenine dinucleotide (NaAD). The chain is Probable nicotinate-nucleotide adenylyltransferase from Desulfitobacterium hafniense (strain DSM 10664 / DCB-2).